A 225-amino-acid chain; its full sequence is Enolase-phosphatase E1 (225 aa).

This sequence belongs to the HAD-like hydrolase superfamily. MasA/MtnC family. In terms of assembly, monomer. The cofactor is Mg(2+).

It carries out the reaction 5-methylsulfanyl-2,3-dioxopentyl phosphate + H2O = 1,2-dihydroxy-5-(methylsulfanyl)pent-1-en-3-one + phosphate. Its pathway is amino-acid biosynthesis; L-methionine biosynthesis via salvage pathway; L-methionine from S-methyl-5-thio-alpha-D-ribose 1-phosphate: step 3/6. The protein operates within amino-acid biosynthesis; L-methionine biosynthesis via salvage pathway; L-methionine from S-methyl-5-thio-alpha-D-ribose 1-phosphate: step 4/6. Its function is as follows. Bifunctional enzyme that catalyzes the enolization of 2,3-diketo-5-methylthiopentyl-1-phosphate (DK-MTP-1-P) into the intermediate 2-hydroxy-3-keto-5-methylthiopentenyl-1-phosphate (HK-MTPenyl-1-P), which is then dephosphorylated to form the acireductone 1,2-dihydroxy-3-keto-5-methylthiopentene (DHK-MTPene). This chain is Enolase-phosphatase E1, found in Shewanella woodyi (strain ATCC 51908 / MS32).